The primary structure comprises 117 residues: NADH-ubiquinone oxidoreductase chain 3 (117 aa).

Helical transmembrane passes span 5-25 (ALSS…AWVL), 57-77 (FFLL…LMPL), and 86-106 (VFTT…GLIH).

The protein belongs to the complex I subunit 3 family.

The protein localises to the mitochondrion membrane. The catalysed reaction is a ubiquinone + NADH + 5 H(+)(in) = a ubiquinol + NAD(+) + 4 H(+)(out). Core subunit of the mitochondrial membrane respiratory chain NADH dehydrogenase (Complex I) that is believed to belong to the minimal assembly required for catalysis. Complex I functions in the transfer of electrons from NADH to the respiratory chain. The immediate electron acceptor for the enzyme is believed to be ubiquinone. The polypeptide is NADH-ubiquinone oxidoreductase chain 3 (ND3) (Lumbricus terrestris (Common earthworm)).